Reading from the N-terminus, the 219-residue chain is Vesicle-associated membrane protein 712 (219 aa).

Residues 1 to 189 lie on the Cytoplasmic side of the membrane; sequence MSILYALVAR…NNTVWWRNCK (189 aa). The Longin domain occupies 7–111; the sequence is LVARGTVVLA…AMNDEFSRVL (105 aa). Residues 126-186 form the v-SNARE coiled-coil homology domain; the sequence is TISRIKGEMN…RRFNNTVWWR (61 aa). Residues 190 to 210 form a helical; Anchor for type IV membrane protein membrane-spanning segment; that stretch reads LTLLLILVLLVIIYIGVAFAC. At 211–219 the chain is on the vesicular side; it reads HGPTLPSCV.

This sequence belongs to the synaptobrevin family. Expressed in flowers, leaves, stems and roots.

The protein localises to the vacuole membrane. The protein resides in the prevacuolar compartment membrane. Its function is as follows. Involved in the targeting and/or fusion of transport vesicles to their target membrane. This is Vesicle-associated membrane protein 712 from Arabidopsis thaliana (Mouse-ear cress).